We begin with the raw amino-acid sequence, 1630 residues long: Transient receptor potential cation channel subfamily M member 1 (1630 aa).

Disordered stretches follow at residues 1–25 (MGSMRKMSSSFKRGSIKSSTSGSQK), 65–92 (PLPSVTPSSTAEDTKQGDAQSGKWSVSK), 453–492 (APPVDTKVAEKEKKPPTATTKGRGKGKGKKKGKVKEEVEE), 620–643 (LGMEDDEPPAKGKKKKKKKKEEEI), and 824–858 (SKENEDGKEKEEENVDANADAGSRKGDEENEHKKQ). Residues 1–877 (MGSMRKMSSS…CEFYNAPIVK (877 aa)) are Cytoplasmic-facing. The span at 8–25 (SSSFKRGSIKSSTSGSQK) shows a compositional bias: low complexity. Residues 69–92 (VTPSSTAEDTKQGDAQSGKWSVSK) are compositionally biased toward polar residues. Positions 474–485 (GRGKGKGKKKGK) are enriched in basic residues. Composition is skewed to basic and acidic residues over residues 825 to 834 (KENEDGKEKE) and 845 to 855 (GSRKGDEENEH). Residues 878 to 898 (FWFYTISYLGYLLLFNYVILV) traverse the membrane as a helical segment. The Extracellular segment spans residues 899–944 (RMDGWPSPQEWIVISYIVSLALEKIREILMSEPGKLSQKIKVWLQE). Residues 945–965 (YWNITDLVAISMFMVGAILRL) traverse the membrane as a helical segment. Residues 966–975 (QNQPYMGYGR) lie on the Cytoplasmic side of the membrane. The chain crosses the membrane as a helical span at residues 976–996 (VIYCVDIILWYIRVLDIFGVN). Topologically, residues 997-1008 (KYLGPYVMMIGK) are extracellular. Residues 1009-1029 (MMIDMLYFVVIMLVVLMSFGV) traverse the membrane as a helical segment. Residues 1030–1107 (ARQAILHPEE…CIPGAWLTPA (78 aa)) are Cytoplasmic-facing. Residues 1108–1128 (LMACYLLVANILLVNLLIAVF) traverse the membrane as a helical segment. N-linked (GlcNAc...) asparagine glycosylation is present at N1129. At 1129 to 1158 (NNTFFEVKSISNQVWKFQRYQLIMTFHDRP) the chain is on the extracellular side. The chain crosses the membrane as a helical span at residues 1159–1179 (VLPPPMIILSHIYIIVMRLSG). Topologically, residues 1180–1630 (RCRKKREGDQ…QEKGNPETEC (451 aa)) are cytoplasmic. Residues 1235–1255 (IRVTSERVENMSMRLEEINER) are a coiled coil. Disordered stretches follow at residues 1362 to 1414 (EDVK…AGEL) and 1575 to 1630 (CLRS…ETEC).

The protein belongs to the transient receptor (TC 1.A.4) family. LTrpC subfamily. TRPM1 sub-subfamily. As to quaternary structure, interacts with TRPM3; the interaction results in the formation of a heteromultimeric cation channel complex that are functionally different from the homomeric channels. Interacts with GPR179. Associates with both guanine nucleotide-binding proteins G(o) and beta-gamma G protein dimer; implicated in directly regulating TRPM1 channel open-state.

The protein resides in the cell membrane. Its subcellular location is the endoplasmic reticulum membrane. It localises to the cell projection. It is found in the axon. The enzyme catalyses Ca(2+)(in) = Ca(2+)(out). It catalyses the reaction Mg(2+)(in) = Mg(2+)(out). The catalysed reaction is Mn(2+)(in) = Mn(2+)(out). It carries out the reaction Ni(2+)(in) = Ni(2+)(out). Its activity is regulated as follows. Inhibited by extracellular zinc ions. Inhibited by intracellular Mg(2+). Activated by the neuroactive steroid pregnenolone sulfate. Negatively regulated by activation of GRM6 receptors in the ON-bipolar cells. Functionally, constitutively open nonselective divalent cation-conducting channels which mediate the influx of Ca(2+), Mg(2+), Mn(2+), Ba(2+), and Ni(2+) into the cytoplasm, leading to membrane depolarization. Impermeable to zinc ions. In addition, forms heteromultimeric ion channels with TRPM3 which are permeable for calcium and zinc ions. Plays an essential role for the depolarizing photoresponse of retinal ON bipolar cells. In the dark, tonic release of glutamate activates the G-protein coupled receptor for glutamate GRM6, its activation induces the release of G(o) protein and the beta-gamma G protein dimer. Both subunits can interact and inactivate the TRPM1 channel. A light onset, induces decrease in glutamate release and deactivation of GRM6 leading to channel opening and membrane depolarization. May play a role in metastasis suppression. The sequence is that of Transient receptor potential cation channel subfamily M member 1 from Rattus norvegicus (Rat).